Consider the following 238-residue polypeptide: MRFDGRGEGSLREVRITRNYIKHAEGSVLVEFGDTKVICTASVESSVPPFLRGKGTGWVTAEYSMLPRATHSRSPREAAKGKVGGRTHEIQRLIGRSLRAVVDMSLLGERSIIIDCDVIQADGGTRTASITGAYVALCDALQGLVAKGELSSLPIREAVAAVSVGIVGGVAVLDLNYVEDSAAEVDMNFVMTSSNRFVEVQGTAEAEPFTIEQMDAMRTLAVDGIKQLFQIQQAVLAR.

Phosphate is bound by residues R86 and 124-126 (GTR).

The protein belongs to the RNase PH family. As to quaternary structure, homohexameric ring arranged as a trimer of dimers.

It carries out the reaction tRNA(n+1) + phosphate = tRNA(n) + a ribonucleoside 5'-diphosphate. Phosphorolytic 3'-5' exoribonuclease that plays an important role in tRNA 3'-end maturation. Removes nucleotide residues following the 3'-CCA terminus of tRNAs; can also add nucleotides to the ends of RNA molecules by using nucleoside diphosphates as substrates, but this may not be physiologically important. Probably plays a role in initiation of 16S rRNA degradation (leading to ribosome degradation) during starvation. The sequence is that of Ribonuclease PH from Geotalea daltonii (strain DSM 22248 / JCM 15807 / FRC-32) (Geobacter daltonii).